A 261-amino-acid chain; its full sequence is Triosephosphate isomerase (261 aa).

Residue 10–12 (NWK) participates in substrate binding. The Electrophile role is filled by His100. Glu172 acts as the Proton acceptor in catalysis. Substrate contacts are provided by residues Gly178, Ser218, and 239 to 240 (GG).

The protein belongs to the triosephosphate isomerase family. Homodimer.

It localises to the cytoplasm. The catalysed reaction is D-glyceraldehyde 3-phosphate = dihydroxyacetone phosphate. The protein operates within carbohydrate biosynthesis; gluconeogenesis. It participates in carbohydrate degradation; glycolysis; D-glyceraldehyde 3-phosphate from glycerone phosphate: step 1/1. Functionally, involved in the gluconeogenesis. Catalyzes stereospecifically the conversion of dihydroxyacetone phosphate (DHAP) to D-glyceraldehyde-3-phosphate (G3P). The polypeptide is Triosephosphate isomerase (Mycolicibacterium vanbaalenii (strain DSM 7251 / JCM 13017 / BCRC 16820 / KCTC 9966 / NRRL B-24157 / PYR-1) (Mycobacterium vanbaalenii)).